Reading from the N-terminus, the 632-residue chain is Dihydrolipoyllysine-residue acetyltransferase component of pyruvate dehydrogenase complex, mitochondrial (632 aa).

The transit peptide at 1–77 (MWRVCARRVQ…LLGSPSRRSY (77 aa)) directs the protein to the mitochondrion. 2 consecutive Lipoyl-binding domains span residues 82-158 (HQKV…CITV) and 208-284 (HMQI…CIIV). Phosphoserine is present on S91. 2 positions are modified to N6-lipoyllysine: K123 and K249. One can recognise a Peripheral subunit-binding (PSBD) domain in the interval 342–379 (FVSPLAKKLAAEKGIDLTQVKGTGPEGRIIKKDIDSFV). R446 is a CoA binding site. At K451 the chain carries N6-acetyllysine. K458 is subject to N6-succinyllysine. Position 460 (S460) interacts with CoA. The residue at position 532 (K532) is an N6-succinyllysine. Residues S551, N552, and G576 each contribute to the CoA site. Catalysis depends on residues H605 and D609.

It belongs to the 2-oxoacid dehydrogenase family. Part of the pyruvate dehydrogenase complex (PDHc) that is a multi-enzyme complex composed of multiple copies of three enzymes, pyruvate dehydrogenase (subunits PDH1A and PDHB, E1 component), dihydrolipoamide acetyltransferase (DLAT, E2 component), and dihydrolipoamide dehydrogenase (DLD, E3 component) to which is added an additional protein the E3-binding protein (PDHX, E3BP). In terms of structural architecture, the E2 and E3BP components assemble into a 60meric central core with icosahedral symmetry. The central core is decorated with E1 and E3 proteins. Currently, two alternative models for the E2:E3BP stoichiometry are considered as being either 48:12 (E2(48)-E3BP(12)) or 40:20 (E2(40)-E3BP(20)). Interacts with PDK2 and PDK3. Interacts with SIRT4. Interacts with PDHB. (R)-lipoate serves as cofactor. Delipoylated at Lys-123 and Lys-249 by SIRT4, delipoylation decreases the PHD complex activity. In terms of tissue distribution, expressed in flagella of epididymal sperm.

The protein resides in the mitochondrion matrix. It carries out the reaction N(6)-[(R)-dihydrolipoyl]-L-lysyl-[protein] + acetyl-CoA = N(6)-[(R)-S(8)-acetyldihydrolipoyl]-L-lysyl-[protein] + CoA. In terms of biological role, as part of the pyruvate dehydrogenase complex, catalyzes the transfers of an acetyl group to a lipoic acid moiety. The pyruvate dehydrogenase complex, catalyzes the overall conversion of pyruvate to acetyl-CoA and CO(2), and thereby links cytoplasmic glycolysis and the mitochondrial tricarboxylic acid (TCA) cycle. This chain is Dihydrolipoyllysine-residue acetyltransferase component of pyruvate dehydrogenase complex, mitochondrial, found in Rattus norvegicus (Rat).